A 132-amino-acid chain; its full sequence is ATP synthase epsilon chain (132 aa).

It belongs to the ATPase epsilon chain family. As to quaternary structure, F-type ATPases have 2 components, CF(1) - the catalytic core - and CF(0) - the membrane proton channel. CF(1) has five subunits: alpha(3), beta(3), gamma(1), delta(1), epsilon(1). CF(0) has three main subunits: a, b and c.

It is found in the cell membrane. Its function is as follows. Produces ATP from ADP in the presence of a proton gradient across the membrane. The sequence is that of ATP synthase epsilon chain from Desulfitobacterium hafniense (strain Y51).